The sequence spans 100 residues: Urease subunit gamma (100 aa).

This sequence belongs to the urease gamma subunit family. In terms of assembly, heterotrimer of UreA (gamma), UreB (beta) and UreC (alpha) subunits. Three heterotrimers associate to form the active enzyme.

It localises to the cytoplasm. It carries out the reaction urea + 2 H2O + H(+) = hydrogencarbonate + 2 NH4(+). It participates in nitrogen metabolism; urea degradation; CO(2) and NH(3) from urea (urease route): step 1/1. The chain is Urease subunit gamma from Hahella chejuensis (strain KCTC 2396).